We begin with the raw amino-acid sequence, 244 residues long: Protein pendolino (244 aa).

The region spanning 20-176 (QQEYKILAEY…VQENIKESKE (157 aa)) is the UBC core domain.

It belongs to the ubiquitin-conjugating enzyme family. FTS subfamily. Interacts (via N-terminus) with cav/HOAP (via N-terminus); the interaction is direct. Probably interacts (via N-terminus and UBC domain) with ver and moi.

The protein localises to the nucleus. It is found in the nucleolus. Its subcellular location is the chromosome. In terms of biological role, required for efficient DNA replication, probably through involvement in telomere replication. May have a role in telomere capping of heterochromatic chromosome ends. The protein is Protein pendolino of Drosophila melanogaster (Fruit fly).